Reading from the N-terminus, the 199-residue chain is Superoxide dismutase [Cu-Zn] (199 aa).

An N-terminal signal peptide occupies residues 1 to 22; sequence MKLTKVALFSLGLFGFSSMALA. Cu cation is bound by residues H92, H94, and H117. The cysteines at positions 99 and 195 are disulfide-linked. 4 residues coordinate Zn(2+): H117, H126, H135, and D138. H173 provides a ligand contact to Cu cation.

Belongs to the Cu-Zn superoxide dismutase family. As to quaternary structure, homodimer. Cu cation is required as a cofactor. Zn(2+) serves as cofactor.

It localises to the periplasm. It catalyses the reaction 2 superoxide + 2 H(+) = H2O2 + O2. Destroys radicals which are normally produced within the cells and which are toxic to biological systems. May play a role in the interactive biology of organisms with their hosts and so contribute to their capacity to cause disease. The chain is Superoxide dismutase [Cu-Zn] (sodC) from Haemophilus ducreyi (strain 35000HP / ATCC 700724).